The sequence spans 558 residues: T-complex protein 1 subunit eta (558 aa).

Residues 524 to 558 are disordered; sequence VRNPKSEQPKAPPGGLRRGGPQGMAGLAKNARLGK.

It belongs to the TCP-1 chaperonin family. As to quaternary structure, heterooligomeric complex of about 850 to 900 kDa that forms two stacked rings, 12 to 16 nm in diameter.

It localises to the cytoplasm. Its function is as follows. Molecular chaperone; assists the folding of proteins upon ATP hydrolysis. Known to play a role, in vitro, in the folding of actin and tubulin. The chain is T-complex protein 1 subunit eta from Tetrahymena pyriformis.